A 56-amino-acid chain; its full sequence is Preprotein translocase subunit SecG (56 aa).

Topologically, residues 1-29 are cytoplasmic; that stretch reads MAKEKATLPPTGAGLMRFFDEDTRAVKVS. A helical membrane pass occupies residues 30–49; it reads PKGVIALTLLLIAFEFILHM. The Extracellular segment spans residues 50–56; it reads FGSSIFG.

The protein belongs to the SEC61-beta family. In terms of assembly, component of the protein translocase complex. Heterotrimer consisting of alpha (SecY), beta (SecG) and gamma (SecE) subunits. Can form oligomers of the heterotrimer.

The protein localises to the cell membrane. Its function is as follows. Involved in protein export. The function of the beta subunit is unknown, but it may be involved in stabilization of the trimeric complex. The chain is Preprotein translocase subunit SecG from Thermococcus kodakarensis (strain ATCC BAA-918 / JCM 12380 / KOD1) (Pyrococcus kodakaraensis (strain KOD1)).